We begin with the raw amino-acid sequence, 64 residues long: Micrurotoxin 1 (64 aa).

Intrachain disulfides connect C3–C24, C6–C11, C17–C41, C45–C57, and C58–C63.

It belongs to the three-finger toxin family. Ancestral subfamily. Expressed by the venom gland.

Its subcellular location is the secreted. Functionally, allosteric modulator of the GABA(A) receptor (GABR), possibly increasing receptor affinity for the agonist, thus enhancing receptor opening and macroscopic desensitization. In vivo, intracerebroventricular injection into mice results in periods of reduced basal activity, followed by bursts of intense seizures and death. The protein is Micrurotoxin 1 of Micrurus mipartitus (Red-tailed coral snake).